The sequence spans 116 residues: Vesicle-associated membrane protein 2 (116 aa).

The segment at 1–28 (MSATAATVPPAAPAGEGGPPAPPPNLTS) is disordered. At S2 the chain carries N-acetylserine. Topologically, residues 2-94 (SATAATVPPA…KRKYWWKNLK (93 aa)) are cytoplasmic. Residues 31-91 (RLQQTQAQVD…AKLKRKYWWK (61 aa)) form the v-SNARE coiled-coil homology domain. The required for interaction with SEPT8 stretch occupies residues 92–116 (NLKMMIILGVICAIILIIIIVYFST). A helical; Anchor for type IV membrane protein transmembrane segment spans residues 95 to 114 (MMIILGVICAIILIIIIVYF). The Vesicular portion of the chain corresponds to 115–116 (ST).

This sequence belongs to the synaptobrevin family. In terms of assembly, part of the SNARE core complex containing SNAP25, VAMP2 and STX1A; this complex constitutes the basic catalytic machinery of the complex neurotransmitter release apparatus. Recruited to the SNARE complex following binding of the SNARE complex component STX1A to STXBP1. This complex binds to CPLX1. Interacts with VAPA and VAPB. Interacts (via N-terminus) with KCNB1 (via N-terminus and C-terminus); stimulates the channel inactivation rate of KCNB1. Interacts with POPDC1 and STX4. Interacts with WDFY2, PRKCZ and PRKCI. Forms a complex with WDFY2 and PRKCZ. Interacts with SEPT8; the interaction inhibits interaction of VAMP2 with SYP. Interacts with SYP; the interaction is inhibited by interaction with SEPT8. Interacts with PICALM. Interacts with alpha-synuclein/SNCA. Interacts with STX3 isoform 3B. In terms of processing, phosphorylated by PRKCZ in vitro and this phosphorylation is increased in the presence of WDFY2. (Microbial infection) Targeted and hydrolyzed by C.botulinum neurotoxin type B (BoNT/B, botB); 20 hours after treatment of spinal cord cells almost all the protein has been digested. BoNT/B hydrolyzes the 76-Gln-|-Phe-77 bond and inhibits neurotransmitter release. Post-translationally, (Microbial infection) Targeted and hydrolyzed by C.tetani toxin (tetX); 20 hours after treatment of spinal cord cells almost all the protein has been digested. Tetanus toxin hydrolyzes the 76-Gln-|-Phe-77 bond and inhibits neurotransmitter release. Expressed in the outer plexiform layer of the retina (at protein level).

Its subcellular location is the cytoplasmic vesicle. The protein resides in the secretory vesicle. The protein localises to the synaptic vesicle membrane. It localises to the cell membrane. Its function is as follows. Involved in the targeting and/or fusion of transport vesicles to their target membrane. Major SNARE protein of synaptic vesicles which mediates fusion of synaptic vesicles to release neurotransmitters. Essential for fast vesicular exocytosis and activity-dependent neurotransmitter release as well as fast endocytosis that mediates rapid reuse of synaptic vesicles. Modulates the gating characteristics of the delayed rectifier voltage-dependent potassium channel KCNB1. This is Vesicle-associated membrane protein 2 (Vamp2) from Mus musculus (Mouse).